Consider the following 646-residue polypeptide: NADP-dependent malic enzyme 4, chloroplastic (646 aa).

Residues 1-74 (MISLTPSLFL…LETSAADIVP (74 aa)) constitute a chloroplast transit peptide. Tyrosine 194 functions as the Proton donor in the catalytic mechanism. Arginine 247 is an NADP(+) binding site. Lysine 265 functions as the Proton acceptor in the catalytic mechanism. Glutamate 337, aspartate 338, and aspartate 361 together coordinate a divalent metal cation. NADP(+)-binding positions include aspartate 361, 390–406 (LFLGAGEAGTGIAELIA), and asparagine 502.

It belongs to the malic enzymes family. As to quaternary structure, homodimer and homotetramer. Mg(2+) serves as cofactor. Requires Mn(2+) as cofactor. In terms of tissue distribution, expressed in leaves, stems, flowers and roots, mainly in vascular system. In roots, present in the stele, including the vascular tissue and the pericycle, mainly at emerging lateral roots and at root tips.

It is found in the plastid. Its subcellular location is the chloroplast. It catalyses the reaction (S)-malate + NADP(+) = pyruvate + CO2 + NADPH. It carries out the reaction oxaloacetate + H(+) = pyruvate + CO2. The protein operates within photosynthesis; C3 acid pathway. In terms of biological role, the chloroplastic ME isoform decarboxylates malate shuttled from neighboring mesophyll cells. The CO(2) released is then refixed by ribulose-bisphosphate carboxylase. This pathway eliminates the photorespiratory loss of CO(2) that occurs in most plants. This chain is NADP-dependent malic enzyme 4, chloroplastic (NADP-ME4), found in Arabidopsis thaliana (Mouse-ear cress).